Reading from the N-terminus, the 328-residue chain is GMP reductase (328 aa).

The active-site Thioimidate intermediate is the C176. 205–228 (IIADGGIRTHGDIAKSIRFGASMI) is an NADP(+) binding site.

It belongs to the IMPDH/GMPR family. GuaC type 2 subfamily.

It carries out the reaction IMP + NH4(+) + NADP(+) = GMP + NADPH + 2 H(+). Functionally, catalyzes the irreversible NADPH-dependent deamination of GMP to IMP. It functions in the conversion of nucleobase, nucleoside and nucleotide derivatives of G to A nucleotides, and in maintaining the intracellular balance of A and G nucleotides. This Streptococcus pneumoniae (strain JJA) protein is GMP reductase.